Consider the following 529-residue polypeptide: Beta-hexosaminidase subunit alpha (529 aa).

Positions 1 to 22 are cleaved as a signal peptide; sequence MAGSTLRFSLLLAAAFAGRATA. The propeptide occupies 23-88; sequence LWPWPQYIQT…RFPHPIEKRH (66 aa). Residues Cys-58 and Cys-104 are joined by a disulfide bond. 3 N-linked (GlcNAc...) asparagine glycosylation sites follow: Asn-115, Asn-157, and Asn-295. A disulfide bond links Cys-277 and Cys-328. Catalysis depends on Glu-323, which acts as the Proton donor. The interval 423–424 is critical for hydrolysis GM2 gangliosides; it reads NH. Cysteines 505 and 522 form a disulfide.

The protein belongs to the glycosyl hydrolase 20 family. As to quaternary structure, there are 3 beta-hexosaminidase isozymes: isozyme A (hexosaminidase A) is a heterodimer composed of one subunit alpha and one subunit beta (chain A and B); isozyme B (hexosaminidase B) is a homodimer of two beta subunits (two chains A and B); isozyme S (hexosaminidase S) is a homodimer of two alpha subunits. The composition of the dimer (isozyme A versus isozyme S) has a significant effect on the substrate specificity of the alpha subunit active site.

It is found in the lysosome. The catalysed reaction is Hydrolysis of terminal non-reducing N-acetyl-D-hexosamine residues in N-acetyl-beta-D-hexosaminides.. It carries out the reaction N-acetyl-beta-D-galactosaminyl-(1-&gt;4)-beta-D-3-sulfogalactosyl-(1-&gt;4)-beta-D-glucosyl-(1&lt;-&gt;1')-ceramide + H2O = a beta-D-3-sulfogalactosyl-(1-&gt;4)-beta-D-glucosyl-(1&lt;-&gt;1')-ceramide + N-acetyl-beta-D-galactosamine. The enzyme catalyses a ganglioside GM2 (d18:1(4E)) + H2O = a ganglioside GM3 (d18:1(4E)) + N-acetyl-beta-D-galactosamine. It catalyses the reaction a ganglioside GM2 + H2O = a ganglioside GM3 + N-acetyl-beta-D-galactosamine. The catalysed reaction is beta-D-GalNAc-(1-&gt;4)-alpha-L-IdoA-(1-&gt;3)-beta-D-GalNAc-4-sulfate-(1-&gt;4)-alpha-L-IdoA-(1-&gt;3)-D-GalNAc-4-sulfate + H2O = alpha-L-IdoA-(1-&gt;3)-beta-D-GalNAc-4-sulfate-(1-&gt;4)-alpha-L-IdoA-(1-&gt;3)-D-GalNAc-4-sulfate + N-acetyl-D-galactosamine. It carries out the reaction N-acetyl-beta-D-6-sulfogalactosaminyl-(1-&gt;4)-alpha-L-iduronyl-(1-&gt;3)-N-acetyl-D-6-sulfogalactosamine + H2O = alpha-L-iduronyl-(1-&gt;3)-N-acetyl-D-6-sulfogalactosamine + N-acetyl-D-6-sulfogalactosamine. Its activity is regulated as follows. Addition of GM2A stimulates the hydrolysis of sulfated glycosphingolipid SM2 and the ganglioside GM2. In terms of biological role, hydrolyzes the non-reducing end N-acetyl-D-hexosamine and/or sulfated N-acetyl-D-hexosamine of glycoconjugates, such as the oligosaccharide moieties from proteins and neutral glycolipids, or from certain mucopolysaccharides. The isozyme S is as active as the isozyme A on the anionic bis-sulfated glycans, the chondroitin-6-sulfate trisaccharide (C6S-3), and the dermatan sulfate pentasaccharide, and the sulfated glycosphingolipid SM2. The isozyme B does not hydrolyze each of these substrates, however hydrolyzes efficiently neutral oligosaccharide. Only the isozyme A is responsible for the degradation of GM2 gangliosides in the presence of GM2A. The sequence is that of Beta-hexosaminidase subunit alpha from Bos taurus (Bovine).